A 377-amino-acid chain; its full sequence is Putative glutamate--cysteine ligase 2 (377 aa).

The protein belongs to the glutamate--cysteine ligase type 2 family. YbdK subfamily.

It carries out the reaction L-cysteine + L-glutamate + ATP = gamma-L-glutamyl-L-cysteine + ADP + phosphate + H(+). Functionally, ATP-dependent carboxylate-amine ligase which exhibits weak glutamate--cysteine ligase activity. The polypeptide is Putative glutamate--cysteine ligase 2 (Pseudomonas aeruginosa (strain ATCC 15692 / DSM 22644 / CIP 104116 / JCM 14847 / LMG 12228 / 1C / PRS 101 / PAO1)).